The sequence spans 396 residues: Cathepsin E (396 aa).

An N-terminal signal peptide occupies residues 1–19 (MKTLLLLLLVLLELGEAQG). Residues 20–53 (SLHRVPLRRHPSLKKKLRARSQLSEFWKSHNLDM) constitute a propeptide, activation peptide. In terms of domain architecture, Peptidase A1 spans 78–396 (YFGTISIGSP…NRVGLAPAVP (319 aa)). Asn90 carries N-linked (GlcNAc...) asparagine glycosylation. Residue Asp96 is part of the active site. 2 cysteine pairs are disulfide-bonded: Cys109-Cys114 and Cys272-Cys276. Asp281 is a catalytic residue. Cys314 and Cys351 are disulfide-bonded.

It belongs to the peptidase A1 family. Homodimer; disulfide-linked. Glycosylated. The nature of the carbohydrate chain varies between cell types. In fibroblasts, the proenzyme contains a high mannose-type oligosaccharide, while the mature enzyme contains a complex-type oligosaccharide. In erythrocyte membranes, both the proenzyme and mature enzyme contain a complex-type oligosaccharide. Post-translationally, two forms are produced by autocatalytic cleavage, form I begins at Ile-54, form II begins at Thr-57. As to expression, expressed abundantly in the stomach, the Clara cells of the lung and activated B-lymphocytes, and at lower levels in lymph nodes, skin and spleen. Not expressed in resting B-lymphocytes.

It localises to the endosome. It carries out the reaction Similar to cathepsin D, but slightly broader specificity.. May have a role in immune function. Probably involved in the processing of antigenic peptides during MHC class II-mediated antigen presentation. May play a role in activation-induced lymphocyte depletion in the thymus, and in neuronal degeneration and glial cell activation in the brain. This is Cathepsin E (CTSE) from Homo sapiens (Human).